The primary structure comprises 688 residues: Glycine--tRNA ligase beta subunit (688 aa).

It belongs to the class-II aminoacyl-tRNA synthetase family. In terms of assembly, tetramer of two alpha and two beta subunits.

It localises to the cytoplasm. The catalysed reaction is tRNA(Gly) + glycine + ATP = glycyl-tRNA(Gly) + AMP + diphosphate. The sequence is that of Glycine--tRNA ligase beta subunit from Colwellia psychrerythraea (strain 34H / ATCC BAA-681) (Vibrio psychroerythus).